The sequence spans 625 residues: Interleukin-1 receptor-associated kinase-like 2 (625 aa).

The Death domain maps to 13 to 94; sequence LDDLCRNMDA…RAAQIILNWK (82 aa). The disordered stretch occupies residues 111-181; that stretch reads KPEKPLAASV…SSDSKDFSTS (71 aa). Ser-144 carries the phosphoserine modification. The segment covering 169–181 has biased composition (polar residues); that stretch reads LPTSSDSKDFSTS. The Protein kinase domain maps to 210–489; that stretch reads FNQNRKISQG…LCLRRRNTSL (280 aa). Residues 216–224, Lys-237, and 337–340 contribute to the ATP site; these read ISQGTFADV and KSSN. A disordered region spans residues 510-540; the sequence is LPWSGLSEGTGSSSNTPEETDDVDNSSLDAS. Residues 516–526 are compositionally biased toward polar residues; the sequence is SEGTGSSSNTP.

The protein belongs to the protein kinase superfamily. TKL Ser/Thr protein kinase family. Pelle subfamily. Interacts with MYD88. IL-1 stimulation leads to the formation of a signaling complex which dissociates from the IL-1 receptor following the binding of PELI1. As to expression, expressed in spleen, thymus, prostate, lung, liver, skeletal muscle, kidney, pancreas and peripheral blood leukocytes.

In terms of biological role, binds to the IL-1 type I receptor following IL-1 engagement, triggering intracellular signaling cascades leading to transcriptional up-regulation and mRNA stabilization. This Homo sapiens (Human) protein is Interleukin-1 receptor-associated kinase-like 2 (IRAK2).